The following is a 253-amino-acid chain: Toxin PezT (253 aa).

39 to 46 is a binding site for ATP; it reads GQSGAGKT. Asp66 serves as the catalytic Proton acceptor.

Belongs to the zeta toxin family. As to quaternary structure, forms a PezA(2)PezT(2) heterotetramer. The heterotetramer is much more stable than either of the proteins alone, and a specific mechanism may be necessary to liberate the toxin.

It catalyses the reaction UDP-N-acetyl-alpha-D-glucosamine + ATP = UDP-N-acetyl-alpha-D-glucosamine 3'-phosphate + ADP + H(+). Toxic component of a type II toxin-antitoxin (TA) system. Phosphorylates UDP-N-acetyl-D-glucosamine (UNAG) on the 3'-hydroxyl group of the N-acetyl-D-glucosamine moiety, yielding UNAG-3P. UNAG-3P inhibits MurA, the first committed step in cell wall synthesis, which is then blocked. Upon expression in E.coli results in decreased cell growth and viability, followed 3 hours later by growth restoration; the toxic effect and phosphorylation of UNAG are neutralized by coexpression with cognate antitoxin PezA. A mutant lacking the last 11 residues is stably maintained in E.coli, unlike the wild-type which undergoes spontaneous mutation. Expression of the deletion mutant in rapidly growing liquid cultures leads to cell bulging, permeabilization and massive lysis by 1 hour. Cells that survive are not able to undergo cytokinesis. Expression in slowly growing cells leads to bulging but not lysis. Its function is as follows. Acts as a corepressor of its own operon with PezA; it is not clear if it binds DNA alone. This chain is Toxin PezT (pezT), found in Streptococcus pneumoniae serotype 4 (strain ATCC BAA-334 / TIGR4).